We begin with the raw amino-acid sequence, 162 residues long: 2-amino-4-hydroxy-6-hydroxymethyldihydropteridine pyrophosphokinase (162 aa).

This sequence belongs to the HPPK family.

It carries out the reaction 6-hydroxymethyl-7,8-dihydropterin + ATP = (7,8-dihydropterin-6-yl)methyl diphosphate + AMP + H(+). The protein operates within cofactor biosynthesis; tetrahydrofolate biosynthesis; 2-amino-4-hydroxy-6-hydroxymethyl-7,8-dihydropteridine diphosphate from 7,8-dihydroneopterin triphosphate: step 4/4. Its function is as follows. Catalyzes the transfer of pyrophosphate from adenosine triphosphate (ATP) to 6-hydroxymethyl-7,8-dihydropterin, an enzymatic step in folate biosynthesis pathway. The polypeptide is 2-amino-4-hydroxy-6-hydroxymethyldihydropteridine pyrophosphokinase (folK) (Pseudomonas aeruginosa (strain ATCC 15692 / DSM 22644 / CIP 104116 / JCM 14847 / LMG 12228 / 1C / PRS 101 / PAO1)).